A 282-amino-acid chain; its full sequence is MSRLHATILTVFPEMFPGTLGHSLAGQALQKNIWSYDVINIRDFGLTKHKNVDDEAYGGGDGLIMRPDVLGNAIDHALSLNPRAKIYYPSPRGKVFTQGFAKEILRDIQLNSESFRQDEFKEEPAEHIIIREQRRMPQNSLVSSLLNDAVNMIFLCGRYEGIDERVIEEYNITEISVGDYILSGGEIPTLTILDCLIRLLPGVLMNQNTLASESFEKDGEFEGGLECGLYTRPEVWYNRKVPSVLLSGNHKLINEWKKEQSLMITKLRRPELLKDLRDKERS.

S-adenosyl-L-methionine is bound by residues G157 and 177-182; that span reads VGDYIL.

The protein belongs to the RNA methyltransferase TrmD family. As to quaternary structure, homodimer.

The protein localises to the cytoplasm. The enzyme catalyses guanosine(37) in tRNA + S-adenosyl-L-methionine = N(1)-methylguanosine(37) in tRNA + S-adenosyl-L-homocysteine + H(+). In terms of biological role, specifically methylates guanosine-37 in various tRNAs. This chain is tRNA (guanine-N(1)-)-methyltransferase, found in Rickettsia bellii (strain RML369-C).